The following is a 172-amino-acid chain: Peptidyl-prolyl cis-trans isomerase CYP18-4 (172 aa).

Positions 7-170 (FFDMSLSGTP…KVVTITDCGQ (164 aa)) constitute a PPIase cyclophilin-type domain.

The protein belongs to the cyclophilin-type PPIase family. In terms of assembly, interacts with A.tumefaciens VirD2. In terms of tissue distribution, ubiquitous, with higher levels in roots and flowers. Confined to vascular tissues. Also detected in stigmas, base of siliques and anthers.

Its subcellular location is the cytoplasm. The enzyme catalyses [protein]-peptidylproline (omega=180) = [protein]-peptidylproline (omega=0). Its activity is regulated as follows. Binds cyclosporin A (CsA). CsA mediates some of its effects via an inhibitory action on PPIase. Functionally, PPIases accelerate the folding of proteins. It catalyzes the cis-trans isomerization of proline imidic peptide bonds in oligopeptides. This is Peptidyl-prolyl cis-trans isomerase CYP18-4 (CYP18-4) from Arabidopsis thaliana (Mouse-ear cress).